We begin with the raw amino-acid sequence, 1173 residues long: MSRGSIEIPLRDTDEVIELDFDQLPEGDEVISILKQEHTQLHIWIALALEYYKQGKTEEFVKLLEAARIDGNLDYRDHEKDQMTCLDTLAAYYVQQARKEKNKDNKKDLITQATLLYTMADKIIMYDQNHLLGRACFCLLEGDKMDQADAQFHFVLNQSPNNIPALLGKACISFNKKDYRGALAYYKKALRTNPGCPAEVRLGMGHCFVKLNKLEKARLAFSRALELNSKCVGALVGLAVLELNNKEADSIKNGVQLLSRAYTIDPSNPMVLNHLANHFFFKKDYSKVQHLALHAFHNTEVEAMQAESCYQLARSFHVQEDYDQAFQYYYQATQFASSSFVLPFFGLGQMYIYRGDKENASQCFEKVLKAYPNNYETMKILGSLYAASEDQEKRDIAKGHLKKVTEQYPDDVEAWIELAQILEQTDIQGALSAYGTATRILQEKVQADVPPEILNNVGALHFRLGNLGEAKKYFLASLDRAKAEAEHDEHYYNAISVTTSYNLARLYEAMCEFHEAEKLYKNILREHPNYVDCYLRLGAMARDKGNFYEASDWFKEALQINQDHPDAWSLIGNLHLAKQEWGPGQKKFERILKQPATQSDTYSMLALGNVWLQTLHQPTRDREKEKRHQDRALAIYKQVLRNDAKNLYAANGIGAVLAHKGYFREARDVFAQVREATADISDVWLNLAHIYVEQKQYISAVQMYENCLRKFYKHQNTEVVLYLARALFKCGKLQECKQTLLKARHVAPSDTVLMFNVALVLQRLATSVLKDEKSNLKEVLNAVKELELAHRYFSYLSKVGDKMRFDLALAASEARQCSDLLSQAQYHVARARKQDEEERELRAKQEQEKELLRQKLLKEQEEKRLREKEEQKKLLEQRAQYVEKTKNILMFTGETEATKEKKRGGGGGRRSKKGGEFDEFVNDDTDDDLPVSKKKKRRKGSGSEQEGEEEEGGERKKKRRRRPPKGEEGSEEEETENGPKPKKRRPPRAEKKKAPKPERLPPSMKGKIKSKAIISSSDDSSDEDKLKIADEGHPRNSNSDSDDDERPNRRASSESDSDDNQNKSGSEAGSPRRSGRQESDEDSDSDQPSRKRRRSGSEQSDNESVQSGRSPSGASENENDSRPASPSAESDHESEQGSDNEGSGQGSGNESEPEGSNNEASDRGSEHGSDDSD.

TPR repeat units follow at residues 41–75 (LHIW…NLDY), 129–162 (NHLL…SPNN), 163–196 (IPAL…NPGC), 198–231 (AEVR…NSKC), 235–268 (LVGL…DPSN), 306–339 (AESC…ASSS), 341–374 (VLPF…YPNN), 412–444 (VEAW…LQEK), 451–484 (PEIL…AKAE), 497–530 (VTTS…HPNY), 531–564 (VDCY…NQDH), 566–598 (DAWS…PATQ), 613–646 (QTLH…DAKN), 647–680 (LYAA…TADI), 681–714 (SDVW…FYKH), and 717–750 (TEVV…APSD). The disordered stretch occupies residues 892–1173 (TGETEATKEK…GSEHGSDDSD (282 aa)). Residues 900–912 (EKKRGGGGGRRSK) show a composition bias toward basic residues. The segment covering 917–929 (FDEFVNDDTDDDL) has biased composition (acidic residues). Thr-925 bears the Phosphothreonine mark. Ser-932, Ser-941, Ser-943, and Ser-970 each carry phosphoserine. The span at 980–994 (KPKKRRPPRAEKKKA) shows a compositional bias: basic residues. Ser-1020 and Ser-1021 each carry phosphoserine. Over residues 1023–1034 (EDKLKIADEGHP) the composition is skewed to basic and acidic residues. Phosphoserine is present on residues Ser-1037, Ser-1039, Ser-1041, Ser-1079, Ser-1083, Ser-1085, Ser-1095, and Ser-1100. A compositionally biased stretch (polar residues) spans 1097–1128 (SEQSDNESVQSGRSPSGASENENDSRPASPSA). The span at 1137–1159 (GSDNEGSGQGSGNESEPEGSNNE) shows a compositional bias: low complexity. Residues 1160–1173 (ASDRGSEHGSDDSD) are compositionally biased toward basic and acidic residues.

In terms of assembly, component of the PAF1 complex, which consists of CDC73, PAF1, LEO1, CTR9, RTF1 and SKIC8. The PAF1 complex interacts with PHF5A. Interacts with KMT2A/MLL1. Interacts with STAT3. Interacts with SETD5. Interacts with ERCC6. In terms of tissue distribution, widely expressed.

It localises to the nucleus speckle. In terms of biological role, component of the PAF1 complex (PAF1C) which has multiple functions during transcription by RNA polymerase II and is implicated in regulation of development and maintenance of embryonic stem cell pluripotency. PAF1C associates with RNA polymerase II through interaction with POLR2A CTD non-phosphorylated and 'Ser-2'- and 'Ser-5'-phosphorylated forms and is involved in transcriptional elongation, acting both independently and synergistically with TCEA1 and in cooperation with the DSIF complex and HTATSF1. PAF1C is required for transcription of Hox and Wnt target genes. PAF1C is involved in hematopoiesis and stimulates transcriptional activity of KMT2A/MLL1. PAF1C is involved in histone modifications such as ubiquitination of histone H2B and methylation on histone H3 'Lys-4' (H3K4me3). PAF1C recruits the RNF20/40 E3 ubiquitin-protein ligase complex and the E2 enzyme UBE2A or UBE2B to chromatin which mediate monoubiquitination of 'Lys-120' of histone H2B (H2BK120ub1); UB2A/B-mediated H2B ubiquitination is proposed to be coupled to transcription. PAF1C is involved in mRNA 3' end formation probably through association with cleavage and poly(A) factors. Required for mono- and trimethylation on histone H3 'Lys-4' (H3K4me3) and dimethylation on histone H3 'Lys-79' (H3K4me3). Required for Hox gene transcription. Required for the trimethylation of histone H3 'Lys-4' (H3K4me3) on genes involved in stem cell pluripotency; this function is synergistic with CXXC1 indicative for an involvement of the SET1 complex. Involved in transcriptional regulation of IL6-responsive genes and in JAK-STAT pathway; may regulate DNA-association of STAT3. This chain is RNA polymerase-associated protein CTR9 homolog (Ctr9), found in Mus musculus (Mouse).